Reading from the N-terminus, the 652-residue chain is Chaperone protein HtpG (652 aa).

The a; substrate-binding stretch occupies residues 1–348; the sequence is MATDAHKETL…SDDLPLNVSR (348 aa). The b stretch occupies residues 349–565; that stretch reads ELLQHNPLLD…EYDFGMGMQR (217 aa). The c stretch occupies residues 566 to 652; sequence LLKAAGHAMP…EAKSNAARGD (87 aa).

This sequence belongs to the heat shock protein 90 family. Homodimer.

The protein localises to the cytoplasm. Functionally, molecular chaperone. Has ATPase activity. This Alkalilimnicola ehrlichii (strain ATCC BAA-1101 / DSM 17681 / MLHE-1) protein is Chaperone protein HtpG.